The following is a 226-amino-acid chain: Aspartyl protease inhibitor (226 aa).

A signal peptide spans 1–15 (MKLLFLCALIALTAA). 2 disordered regions span residues 95-116 (GKKGKAVETSSEELPKAPKKPS) and 196-218 (EAKQTTTTEAPELPEEAPEQPNV). A disulfide bond links Cys131 and Cys222.

This sequence belongs to the protease inhibitor I33 family.

The protein resides in the secreted. Functionally, aspartyl protease inhibitor. The sequence is that of Aspartyl protease inhibitor from Parelaphostrongylus tenuis (Meningeal worm).